Reading from the N-terminus, the 247-residue chain is tRNA pseudouridine synthase A (247 aa).

Residue D52 is the Nucleophile of the active site. Y110 contributes to the substrate binding site.

This sequence belongs to the tRNA pseudouridine synthase TruA family. As to quaternary structure, homodimer.

It catalyses the reaction uridine(38/39/40) in tRNA = pseudouridine(38/39/40) in tRNA. Functionally, formation of pseudouridine at positions 38, 39 and 40 in the anticodon stem and loop of transfer RNAs. The polypeptide is tRNA pseudouridine synthase A (Geobacter sp. (strain M21)).